We begin with the raw amino-acid sequence, 496 residues long: Transcription termination factor MTERF9, chloroplastic (496 aa).

A chloroplast-targeting transit peptide spans 1–44 (MAGFSLYCFKNPRILFTLPSESPLFVLGSDKCSPATRRPSRKTR). 2 disordered regions span residues 57 to 90 (IINP…DDDW) and 102 to 155 (YEKK…SWRL). Residues 74–90 (DSDEDDDDDDDDDDDDW) show a composition bias toward acidic residues. Basic residues predominate over residues 105-123 (KKPKSHKQTIAKKSVKKGI). Residues 146-155 (SEKKKESWRL) are compositionally biased toward basic and acidic residues.

Belongs to the mTERF family.

It localises to the plastid. The protein resides in the chloroplast. In terms of biological role, transcription termination factor required for processing and steady-state levels of plastid transcripts. May play a role in response to abiotic stresses. The protein is Transcription termination factor MTERF9, chloroplastic of Arabidopsis thaliana (Mouse-ear cress).